The primary structure comprises 121 residues: Large ribosomal subunit protein uL18 (121 aa).

It belongs to the universal ribosomal protein uL18 family. As to quaternary structure, part of the 50S ribosomal subunit; part of the 5S rRNA/L5/L18/L25 subcomplex. Contacts the 5S and 23S rRNAs.

This is one of the proteins that bind and probably mediate the attachment of the 5S RNA into the large ribosomal subunit, where it forms part of the central protuberance. This is Large ribosomal subunit protein uL18 from Herpetosiphon aurantiacus (strain ATCC 23779 / DSM 785 / 114-95).